The primary structure comprises 290 residues: MIYYGTMFDHKVRFSIVRMREVVEEARNRHVLSYLATVVLGRALIGAALVTPWLAEKERWTLDIEGSGPIRRVVAQSTSEFTVRGYVANPKVELPLNEKGKFDVAGAIGQGVLRVVRDLGLKTPFVSQVPLVSGEIAEDLAYYFAVSEQIPSAFSIGVLVDSGGVKIAGGFAVQIIDRTLEQEKVELIERNIKNLPYITELFQKAEPLDVLERIFGEKVGFVETAEIRYKCDCNREKAKNALLVLDKKELEDMRKEGKGEVVCKWCNTKYVFSEEELEELLKFKVDNSGS.

2 disulfides stabilise this stretch: Cys231/Cys233 and Cys263/Cys266.

It belongs to the HSP33 family. Under oxidizing conditions two disulfide bonds are formed involving the reactive cysteines. Under reducing conditions zinc is bound to the reactive cysteines and the protein is inactive.

Its subcellular location is the cytoplasm. Redox regulated molecular chaperone. Protects both thermally unfolding and oxidatively damaged proteins from irreversible aggregation. Plays an important role in the bacterial defense system toward oxidative stress. The chain is 33 kDa chaperonin from Thermotoga sp. (strain RQ2).